A 470-amino-acid chain; its full sequence is Acetyl-CoA decarbonylase/synthase complex subunit gamma 2 (470 aa).

A 4Fe-4S domain is found at 1–60 (MKINSPLEAYKYLPQTNCGECGQPTCMAFASTLIDRSGKTTDCPPLIKEKKFAKKLAELD). 4 residues coordinate [4Fe-4S] cluster: cysteine 18, cysteine 21, cysteine 26, and cysteine 43.

Heterodimer of delta and gamma chains. The ACDS complex is made up of alpha, epsilon, beta, gamma and delta chains with a probable stoichiometry of (alpha(2)epsilon(2))(4)-beta(8)-(gamma(1)delta(1))(8). Corrinoid serves as cofactor. The cofactor is [4Fe-4S] cluster.

The enzyme catalyses 5,6,7,8-tetrahydrosarcinapterin + methyl-Co(III)-[corrinoid Fe-S protein] = 5-methyltetrahydrosarcinapterin + Co(I)-[corrinoid Fe-S protein] + H(+). It participates in one-carbon metabolism; methanogenesis from acetate. Functionally, part of a complex that catalyzes the reversible cleavage of acetyl-CoA, allowing growth on acetate as sole source of carbon and energy. This Methanosarcina mazei (strain ATCC BAA-159 / DSM 3647 / Goe1 / Go1 / JCM 11833 / OCM 88) (Methanosarcina frisia) protein is Acetyl-CoA decarbonylase/synthase complex subunit gamma 2.